We begin with the raw amino-acid sequence, 372 residues long: Dual-specificity RNA methyltransferase RlmN (372 aa).

Glu-97 functions as the Proton acceptor in the catalytic mechanism. The Radical SAM core domain occupies 103-340; the sequence is ETDRKTLCVS…AVVRKNRGTD (238 aa). A disulfide bridge connects residues Cys-110 and Cys-345. Positions 117, 121, and 124 each coordinate [4Fe-4S] cluster. S-adenosyl-L-methionine-binding positions include 172–173, Ser-204, 226–228, and Asn-302; these read GE and SLN. Cys-345 serves as the catalytic S-methylcysteine intermediate. Positions 350 to 372 are disordered; it reads AEGGPGDPRRRAAAALTGTPAAG. The segment covering 362-372 has biased composition (low complexity); that stretch reads AAALTGTPAAG.

This sequence belongs to the radical SAM superfamily. RlmN family. It depends on [4Fe-4S] cluster as a cofactor.

The protein resides in the cytoplasm. The enzyme catalyses adenosine(2503) in 23S rRNA + 2 reduced [2Fe-2S]-[ferredoxin] + 2 S-adenosyl-L-methionine = 2-methyladenosine(2503) in 23S rRNA + 5'-deoxyadenosine + L-methionine + 2 oxidized [2Fe-2S]-[ferredoxin] + S-adenosyl-L-homocysteine. It catalyses the reaction adenosine(37) in tRNA + 2 reduced [2Fe-2S]-[ferredoxin] + 2 S-adenosyl-L-methionine = 2-methyladenosine(37) in tRNA + 5'-deoxyadenosine + L-methionine + 2 oxidized [2Fe-2S]-[ferredoxin] + S-adenosyl-L-homocysteine. In terms of biological role, specifically methylates position 2 of adenine 2503 in 23S rRNA and position 2 of adenine 37 in tRNAs. m2A2503 modification seems to play a crucial role in the proofreading step occurring at the peptidyl transferase center and thus would serve to optimize ribosomal fidelity. The polypeptide is Dual-specificity RNA methyltransferase RlmN (Anaeromyxobacter dehalogenans (strain 2CP-C)).